A 622-amino-acid polypeptide reads, in one-letter code: Probable E3 ubiquitin-protein ligase DTX2 (622 aa).

WWE domains follow at residues S8–R97 and H98–R174. Asymmetric dimethylarginine occurs at positions 213, 215, and 233. Residue K249 is modified to N6-acetyllysine. Disordered regions lie at residues K249–Q324 and A355–P393. Residue R256 is modified to Omega-N-methylarginine. Residues L274–S285 show a composition bias toward polar residues. The segment covering S299–P322 has biased composition (low complexity). At S360 the chain carries Phosphoserine. Residues G372–S381 are compositionally biased toward basic residues. The RING-type zinc finger occupies C412–K473.

Belongs to the Deltex family. As to quaternary structure, homodimer. May form a heterodimer with other members of the Deltex family. Interacts with NOTCH1.

It is found in the cytoplasm. The protein localises to the nucleus. It carries out the reaction S-ubiquitinyl-[E2 ubiquitin-conjugating enzyme]-L-cysteine + [acceptor protein]-L-lysine = [E2 ubiquitin-conjugating enzyme]-L-cysteine + N(6)-ubiquitinyl-[acceptor protein]-L-lysine.. Its pathway is protein modification; protein ubiquitination. In terms of biological role, regulator of Notch signaling, a signaling pathway involved in cell-cell communications that regulates a broad spectrum of cell-fate determinations. Probably acts both as a positive and negative regulator of Notch, depending on the developmental and cell context. Mediates the antineural activity of Notch, possibly by inhibiting the transcriptional activation mediated by MATCH1. Functions as a ubiquitin ligase protein in vitro, suggesting that it may regulate the Notch pathway via some ubiquitin ligase activity. The sequence is that of Probable E3 ubiquitin-protein ligase DTX2 (DTX2) from Homo sapiens (Human).